Here is a 617-residue protein sequence, read N- to C-terminus: Urocanate reductase (617 aa).

At T70 the chain carries FMN phosphoryl threonine. Positions 124, 143, 151, 152, 156, 157, and 387 each coordinate FAD. R446 (proton donor) is an active-site residue. Residues H553, E582, and L598 each coordinate FAD.

It belongs to the FAD-dependent oxidoreductase 2 family. FRD/SDH subfamily. Requires FAD as cofactor. FMN is required as a cofactor.

It carries out the reaction dihydrourocanate + A = urocanate + AH2. Catalyzes the two-electron reduction of urocanate to dihydrourocanate (also named imidazole propionate or deamino-histidine). Dihydrourocanate is present at higher concentrations in subjects with type 2 diabetes, and directly impairs glucose tolerance and insulin signaling at the level of insulin receptor substrate (IRS) through activation of p38 gamma (MAPK12)-p62-mTORC1. Therefore, the UrdA enzyme from the gut bacteria L.fermentum strain NBRC 3956 may contribute to the pathogenesis of type 2 diabetes by producing the microbial metabolite dihydrourocanate. In Limosilactobacillus fermentum (strain NBRC 3956 / LMG 18251) (Lactobacillus fermentum), this protein is Urocanate reductase.